Consider the following 84-residue polypeptide: Small ribosomal subunit protein bS16 (84 aa).

This sequence belongs to the bacterial ribosomal protein bS16 family.

The sequence is that of Small ribosomal subunit protein bS16 from Endomicrobium trichonymphae.